A 2240-amino-acid chain; its full sequence is Death-inducer obliterator 1 (2240 aa).

At Met-1 the chain carries N-acetylmethionine. The segment covering 1 to 25 (MDDKGDPSNEEAPKAIKPTSKEFRK) has biased composition (basic and acidic residues). A disordered region spans residues 1–259 (MDDKGDPSNE…EPGDLGRPKP (259 aa)). Ser-60 and Ser-114 each carry phosphoserine. The span at 111–130 (SEGSVESASETRSGPQSAST) shows a compositional bias: polar residues. The segment covering 132–146 (VKERPASSEKVKGGD) has biased composition (basic and acidic residues). Residues 147 to 156 (DHDDTSDSDS) are compositionally biased toward acidic residues. Thr-151 bears the Phosphothreonine mark. Residues Ser-152 and Ser-154 each carry the phosphoserine modification. 2 short sequence motifs (nuclear localization signal) span residues 165–173 (QNRLRRKRE) and 185–193 (QSRLRKKRR). Over residues 172-181 (REQEPTERPL) the composition is skewed to basic and acidic residues. Positions 230–246 (GKDDRESKLEGKAAQDI) are enriched in basic and acidic residues. A Glycyl lysine isopeptide (Lys-Gly) (interchain with G-Cter in SUMO2) cross-link involves residue Lys-247. The PHD-type zinc finger occupies 268–322 (ALYCICRQPHNNRFMICCDRCEEWFHGDCVGISEARGRLLERNGEDYICPNCTIL). 9 disordered regions span residues 431-456 (SGKEQKPKPKEKMKMKPEKPSLPKCG), 501-567 (STPS…RNLV), 584-618 (KKPPSGFKGTIPKRPWLSATPSSGASAARQAGPAP), 773-826 (RPAR…EKST), 860-947 (VPSA…EDLS), 1013-1045 (LAKPSSSPDPRYLSVPPSPNISTSESRSPPEGD), 1206-1427 (GELD…VAYD), 1453-1472 (RRNSVERPAEPVAGAATPSL), and 1517-2240 (SDAL…ASQA). Basic and acidic residues predominate over residues 433-451 (KEQKPKPKEKMKMKPEKPS). Polar residues predominate over residues 501-510 (STPSWASDHN). A Phosphoserine modification is found at Ser-523. Residues 530–541 (STKEDRRSEEKA) are compositionally biased toward basic and acidic residues. 2 stretches are compositionally biased toward low complexity: residues 542–551 (AAMAASKKTA) and 604–618 (PSSGASAARQAGPAP). The 121-residue stretch at 670–790 (IRQNIRRSLK…SRTKLHNESK (121 aa)) folds into the TFIIS central domain. Over residues 773–791 (RPARSVMESRTKLHNESKK) the composition is skewed to basic and acidic residues. The segment covering 800-815 (PDLEDSPPVSDSEEQQ) has biased composition (acidic residues). Phosphoserine is present on residues Ser-805 and Ser-809. Basic and acidic residues predominate over residues 878 to 890 (VKKEDLKSKHDSS). Residue Lys-879 forms a Glycyl lysine isopeptide (Lys-Gly) (interchain with G-Cter in SUMO2) linkage. Residues Ser-889 and Ser-898 each carry the phosphoserine modification. Residues 930–941 (PGPPGDGHPEPS) are compositionally biased toward pro residues. Phosphoserine is present on residues Ser-1019, Ser-1030, and Ser-1040. Residues 1207–1220 (ELDKMDEKRTRLQP) show a composition bias toward basic and acidic residues. The residue at position 1244 (Tyr-1244) is a Phosphotyrosine. A Phosphothreonine modification is found at Thr-1256. Positions 1258–1271 (PGSPPPPPPLPEPP) are enriched in pro residues. 2 positions are modified to phosphoserine: Ser-1260 and Ser-1312. The segment covering 1276–1313 (LSSLKPAAPSPATAATTAAAASTAASSTASSASKTASP) has biased composition (low complexity). Over residues 1376–1392 (LEEEEDDRPYDPEEEYD) the composition is skewed to acidic residues. The span at 1393–1424 (PERAFDTQLVERGRRHEVERAPEAAAAEREEV) shows a compositional bias: basic and acidic residues. A Phosphoserine modification is found at Ser-1456. Thr-1469 is subject to Phosphothreonine. 2 positions are modified to phosphoserine: Ser-1522 and Ser-1714. The span at 1771-1782 (FPGPRGPAPPFP) shows a compositional bias: pro residues. The residue at position 1835 (Arg-1835) is an Omega-N-methylarginine. The span at 1842–1856 (FEERKDPHGEKREFQ) shows a compositional bias: basic and acidic residues. An asymmetric dimethylarginine mark is found at Arg-1893, Arg-1894, Arg-1977, Arg-1982, Arg-1993, Arg-2008, and Arg-2024. Residues 2044 to 2059 (AGPPSALSSSAPGQGP) are compositionally biased toward low complexity. 2 stretches are compositionally biased toward basic and acidic residues: residues 2069–2101 (DFREGKGHEYRNQTFEGRQRERFDVGPKEKPLE) and 2109–2230 (ASED…EASR).

As to quaternary structure, interacts specifically (via PHD-type zinc finger) with histone H3 that is trimethylated at 'Lys-4' (H3K4me3), histone phosphorylation at 'Thr-3' or 'Thr-6' disrupts this binding and promotes translocation of DIDO1 from chromatin to the mitotic spindle during mitosis. Ubiquitous.

Its subcellular location is the cytoplasm. It is found in the nucleus. It localises to the cytoskeleton. The protein resides in the spindle. Functionally, putative transcription factor, weakly pro-apoptotic when overexpressed. Tumor suppressor. Required for early embryonic stem cell development. Displaces isoform 4 at the onset of differentiation, required for repression of stemness genes. This chain is Death-inducer obliterator 1 (DIDO1), found in Homo sapiens (Human).